Consider the following 526-residue polypeptide: Nucleobase-ascorbate transporter 4 (526 aa).

Helical transmembrane passes span 42–62 (IVMLGTTVIIPSILVPLMGGG), 69–89 (VINTVLFVSGINTLLQSLFGS), 91–111 (LPVVMGASYAYLIPALYITFS), 131–151 (IQGALIIASISHMIMGFFGLW), 157–177 (FLSPLSAAPLVILTGVGLLAF), 186–206 (IEIGLPALIILIILSQYLPHL), 217–237 (FAVLFTIAIVWAYAEILTAAG), 282–302 (AFAMMAATYVAIVETTGSFIA), 359–381 (RVVQISAGFMIFFSIFGKFGAVL), 388–410 (IFAALYCVLFAYVASAGLGLLQF), 420–440 (FILGFSIFIGLSVAQYFTEYL), and 457–477 (VIMQVIFSSAATVGIMAAFLL).

This sequence belongs to the nucleobase:cation symporter-2 (NCS2) (TC 2.A.40) family. As to expression, highly expressed in the root central cylinder. Expressed in the filaments and stigmatic papillae of pollinated flowers and developing siliques.

The protein localises to the membrane. The protein is Nucleobase-ascorbate transporter 4 (NAT4) of Arabidopsis thaliana (Mouse-ear cress).